The following is a 79-amino-acid chain: UPF0150 protein ssr1765 (79 aa).

Belongs to the UPF0150 family.

The protein is UPF0150 protein ssr1765 of Synechocystis sp. (strain ATCC 27184 / PCC 6803 / Kazusa).